Reading from the N-terminus, the 124-residue chain is Small ribosomal subunit protein eS25 (124 aa).

A compositionally biased stretch (basic and acidic residues) spans 1–22 (PPKDDKKKKDAGKSAKKDKDPV). The disordered stretch occupies residues 1 to 37 (PPKDDKKKKDAGKSAKKDKDPVNKSGGKAKKKKWSKG). Residues 27 to 37 (GKAKKKKWSKG) are compositionally biased toward basic residues. Lysine 42 carries the N6-acetyllysine modification. Lysine 51 bears the N6-acetyllysine; alternate mark. Residue lysine 51 is modified to N6-succinyllysine; alternate. An N6-acetyllysine mark is found at lysine 59 and lysine 65. Position 93 is an N6-acetyllysine; alternate (lysine 93). Lysine 93 carries the post-translational modification N6-succinyllysine; alternate.

Belongs to the eukaryotic ribosomal protein eS25 family. In terms of assembly, component of the small ribosomal subunit.

Its subcellular location is the cytoplasm. Component of the small ribosomal subunit. The ribosome is a large ribonucleoprotein complex responsible for the synthesis of proteins in the cell. This chain is Small ribosomal subunit protein eS25 (RPS25), found in Oryctolagus cuniculus (Rabbit).